The chain runs to 129 residues: Large ribosomal subunit protein bL20 (129 aa).

The protein belongs to the bacterial ribosomal protein bL20 family.

Its function is as follows. Binds directly to 23S ribosomal RNA and is necessary for the in vitro assembly process of the 50S ribosomal subunit. It is not involved in the protein synthesizing functions of that subunit. This Mycobacterium marinum (strain ATCC BAA-535 / M) protein is Large ribosomal subunit protein bL20.